Reading from the N-terminus, the 88-residue chain is uncharacterized protein (88 aa).

This is an uncharacterized protein from Haloarcula hispanica (His1V).